Here is a 53-residue protein sequence, read N- to C-terminus: Collagen alpha-1(I) chain (53 aa).

The segment at 1-53 (SYGYBZKSAGVSVPGPMGPSGPRGLPGPPGAPGPZGFZGPPGZPGZPGSSGPM) is disordered. Allysine is present on Lys7. Position 8 is a phosphoserine (Ser8). The segment covering 10–23 (GVSVPGPMGPSGPR) has biased composition (low complexity). 4-hydroxyproline occurs at positions 26, 29, 32, 41, 44, and 47. A compositionally biased stretch (low complexity) spans 34 to 53 (PZGFZGPPGZPGZPGSSGPM).

Belongs to the fibrillar collagen family. Trimers of one alpha 2(I) and two alpha 1(I) chains. Interacts with MRC2. Interacts with TRAM2. Interacts with MFAP4 in a Ca (2+)-dependent manner. Contains mostly 4-hydroxyproline. Proline residues at the third position of the tripeptide repeating unit (G-X-Y) are hydroxylated in some or all of the chains. In terms of processing, contains 3-hydroxyproline at a few sites. This modification occurs on the first proline residue in the sequence motif Gly-Pro-Hyp, where Hyp is 4-hydroxyproline. Post-translationally, lysine residues at the third position of the tripeptide repeating unit (G-X-Y) are 5-hydroxylated in some or all of the chains. O-glycosylated on hydroxylated lysine residues. The O-linked glycan consists of a Glc-Gal disaccharide. As to expression, forms the fibrils of tendon, ligaments and bones. In bones the fibrils are mineralized with calcium hydroxyapatite.

The protein resides in the secreted. Its subcellular location is the extracellular space. It is found in the extracellular matrix. Functionally, type I collagen is a member of group I collagen (fibrillar forming collagen). This chain is Collagen alpha-1(I) chain (COL1A1), found in Oryctolagus cuniculus (Rabbit).